The sequence spans 378 residues: Succinyl-diaminopimelate desuccinylase (378 aa).

His67 lines the Zn(2+) pocket. Asp69 is an active-site residue. Asp100 is a binding site for Zn(2+). The active-site Proton acceptor is the Glu134. Residues Glu135, Glu163, and His349 each contribute to the Zn(2+) site.

This sequence belongs to the peptidase M20A family. DapE subfamily. Homodimer. Zn(2+) serves as cofactor. Requires Co(2+) as cofactor.

The enzyme catalyses N-succinyl-(2S,6S)-2,6-diaminopimelate + H2O = (2S,6S)-2,6-diaminopimelate + succinate. It participates in amino-acid biosynthesis; L-lysine biosynthesis via DAP pathway; LL-2,6-diaminopimelate from (S)-tetrahydrodipicolinate (succinylase route): step 3/3. Its function is as follows. Catalyzes the hydrolysis of N-succinyl-L,L-diaminopimelic acid (SDAP), forming succinate and LL-2,6-diaminopimelate (DAP), an intermediate involved in the bacterial biosynthesis of lysine and meso-diaminopimelic acid, an essential component of bacterial cell walls. The protein is Succinyl-diaminopimelate desuccinylase of Pasteurella multocida (strain Pm70).